We begin with the raw amino-acid sequence, 402 residues long: Formate-dependent phosphoribosylglycinamide formyltransferase (402 aa).

Residues 25-26 (EL) and Glu-85 contribute to the N(1)-(5-phospho-beta-D-ribosyl)glycinamide site. ATP is bound by residues Arg-118, Lys-159, 164–169 (SSGKGQ), 199–202 (EQFV), and Glu-207. Residues 123–318 (RLASEELGLP…EFELHAKAVL (196 aa)) form the ATP-grasp domain. Mg(2+)-binding residues include Glu-277 and Glu-289. Residues Asp-296, Lys-365, and 372–373 (RR) contribute to the N(1)-(5-phospho-beta-D-ribosyl)glycinamide site.

This sequence belongs to the PurK/PurT family. In terms of assembly, homodimer.

It carries out the reaction N(1)-(5-phospho-beta-D-ribosyl)glycinamide + formate + ATP = N(2)-formyl-N(1)-(5-phospho-beta-D-ribosyl)glycinamide + ADP + phosphate + H(+). It functions in the pathway purine metabolism; IMP biosynthesis via de novo pathway; N(2)-formyl-N(1)-(5-phospho-D-ribosyl)glycinamide from N(1)-(5-phospho-D-ribosyl)glycinamide (formate route): step 1/1. Involved in the de novo purine biosynthesis. Catalyzes the transfer of formate to 5-phospho-ribosyl-glycinamide (GAR), producing 5-phospho-ribosyl-N-formylglycinamide (FGAR). Formate is provided by PurU via hydrolysis of 10-formyl-tetrahydrofolate. In Corynebacterium efficiens (strain DSM 44549 / YS-314 / AJ 12310 / JCM 11189 / NBRC 100395), this protein is Formate-dependent phosphoribosylglycinamide formyltransferase.